Here is a 407-residue protein sequence, read N- to C-terminus: Proteasome-activating nucleotidase (407 aa).

Residues 22 to 67 adopt a coiled-coil conformation; it reads KEKAYLAELESKVLRLELKNKDITRENVQIKKENEILKRELDKLRI. Residues 192–197 and His331 contribute to the ATP site; that span reads GTGKTL. Residues 405-407 are docks into pockets in the proteasome alpha-ring to cause gate opening; the sequence is MYG.

This sequence belongs to the AAA ATPase family. As to quaternary structure, homohexamer. The hexameric complex has a two-ring architecture resembling a top hat that caps the 20S proteasome core at one or both ends. Upon ATP-binding, the C-terminus of PAN interacts with the alpha-rings of the proteasome core by binding to the intersubunit pockets.

The protein localises to the cytoplasm. Its function is as follows. ATPase which is responsible for recognizing, binding, unfolding and translocation of substrate proteins into the archaeal 20S proteasome core particle. Is essential for opening the gate of the 20S proteasome via an interaction with its C-terminus, thereby allowing substrate entry and access to the site of proteolysis. Thus, the C-termini of the proteasomal ATPase function like a 'key in a lock' to induce gate opening and therefore regulate proteolysis. Unfolding activity requires energy from ATP hydrolysis, whereas ATP binding alone promotes ATPase-20S proteasome association which triggers gate opening, and supports translocation of unfolded substrates. The protein is Proteasome-activating nucleotidase of Methanococcus vannielii (strain ATCC 35089 / DSM 1224 / JCM 13029 / OCM 148 / SB).